The sequence spans 255 residues: Acetylglutamate kinase (255 aa).

Substrate is bound by residues 40–41 (GG), Arg62, and Asn153.

The protein belongs to the acetylglutamate kinase family. ArgB subfamily.

The protein resides in the cytoplasm. The enzyme catalyses N-acetyl-L-glutamate + ATP = N-acetyl-L-glutamyl 5-phosphate + ADP. The protein operates within amino-acid biosynthesis; L-arginine biosynthesis; N(2)-acetyl-L-ornithine from L-glutamate: step 2/4. In terms of biological role, catalyzes the ATP-dependent phosphorylation of N-acetyl-L-glutamate. The chain is Acetylglutamate kinase from Bacillus cereus (strain ATCC 10987 / NRS 248).